The primary structure comprises 834 residues: Copper-exporting P-type ATPase (834 aa).

The Cytoplasmic portion of the chain corresponds to 2–186 (SQTIDLTLDG…TAVATMKRFR (185 aa)). HMA domains are found at residues 3–64 (QTID…YDAS) and 99–162 (DSQQ…YGAE). Cu(+)-binding residues include Cys-14, Cys-17, Cys-110, and Cys-113. 2 consecutive short sequence motifs (CXXC motif) follow at residues 14 to 17 (CGHC) and 110 to 113 (CASC). Residues 187–207 (WQAIVALAVGIPVMVWGMIGD) form a helical membrane-spanning segment. Residues 208 to 217 (NMMVTADNRS) lie on the Periplasmic; loop 1 side of the membrane. A helical membrane pass occupies residues 218–238 (LWLVIGLITLAVMVFAGGHFY). Residues 239–253 (RSAWKSLLNGAATMD) lie on the Cytoplasmic side of the membrane. A helical membrane pass occupies residues 254–274 (TLVALGTGVAWLYSMSVNLWP). Topologically, residues 275 to 283 (QWFPMEARH) are periplasmic; loop 2. Residues 284–304 (LYYEASAMIIGLINLGHMLEA) form a helical membrane-spanning segment. Residues 305–437 (RARQRSSKAL…EIGQLADKIS (133 aa)) lie on the Cytoplasmic side of the membrane. Residues 438–458 (AVFVPVVVVIALVSAAIWYFF) traverse the membrane as a helical segment. Residues 459–463 (GPAPQ) lie on the Periplasmic; loop 3 side of the membrane. Residues 464–484 (IVYTLVIATTVLIIACPCALG) traverse the membrane as a helical segment. Residues 485-778 (LATPMSIISG…ATLHNMKQNL (294 aa)) are Cytoplasmic-facing. Asp-523 serves as the catalytic 4-aspartylphosphate intermediate. Mg(2+) contacts are provided by Asp-720 and Asp-724. The helical transmembrane segment at 779–799 (LGAFIYNSIGIPVAAGILWPF) threads the bilayer. Residue Thr-800 is a topological domain, periplasmic; loop 4. The chain crosses the membrane as a helical span at residues 801-821 (GTLLNPVVAGAAMALSSITVV). Residues 822-834 (SNANRLLRFKPKE) are Cytoplasmic-facing.

It belongs to the cation transport ATPase (P-type) (TC 3.A.3) family. Type IB subfamily. In terms of assembly, copper-exporting P-type ATPase interacts with apo-periplasmic copper chaperone CusF; when CusF is precharged with copper it binds very little CopA. The periplasmic loops of CopA, especially the first half of loop 1, play a large role in binding to CusF.

The protein localises to the cell inner membrane. Its subcellular location is the cytoplasm. The catalysed reaction is Cu(+)(in) + ATP + H2O = Cu(+)(out) + ADP + phosphate + H(+). Its activity is regulated as follows. Export is inhibited by vanadate. Phosphorylation is inhibited by vanadate and sensitive to KOH and hydroxylamine; it is not inhibited by azide. Phosphorylation is Cu(+) not Cu(2+)-dependent. ATPase activity is inhibited by bathocuproindisulfonate (BCDS), which chelates Cu(+) but not Cu(2+), and stimulated 3-4-fold by Cu(+). ATPase activity is inhibited by Cu(2+) plus DTT or Ag(+). Exports Cu(+) from the cytoplasm to the periplasm. Binds 2 Cu(+) ions per monomer, which are transferred to periplasmic copper chaperone CusF upon ATP hydrolysis. In vitro an excess of CusF over CopA is required for efficient transfer. May also be involved in silver export. Its function is as follows. mRNA is subject to programmed ribosomal frameshifting which produces a cytoplasmic copper chaperone CopA(Z) that corresponds to the first HMA domain. The soluble form is essential for cell survivial in the presence of CuSO(4); in growth competition experiments between wild-type and a version that prevents expression of CopA(Z) after 50 generations the non-CopA(Z) version is nearly extinct. The first HMA domain (residues 1-70) can be replaced by B.subtilis Cu chaperone CopZ. The sequence is that of Copper-exporting P-type ATPase from Escherichia coli (strain K12).